We begin with the raw amino-acid sequence, 527 residues long: Homeobox protein NOBOX (527 aa).

4 disordered regions span residues 1–126 (MEPT…DLKK), 194–245 (VEKL…DVFP), 271–306 (VTPPLLSPPPIRRANLPLPLGPVQTPQVLPPMRDVP), and 488–527 (ETGSSLSKMSDEQTSSSLEQPALEEVRDKNKNSHAAGAKE). Positions 136–195 (RKKTRTLYRSDQLEELERIFQEDHYPDSDKRHEISQMVGVTPQRIMVWFQNRRAKWRKVE) form a DNA-binding region, homeobox. A compositionally biased stretch (basic and acidic residues) spans 194–203 (VEKLNEKETK). A compositionally biased stretch (polar residues) spans 488 to 506 (ETGSSLSKMSDEQTSSSLE). Positions 511–527 (EEVRDKNKNSHAAGAKE) are enriched in basic and acidic residues.

Specifically expressed in ovaries and testes. In ovaries, expressed in oocytes from primordial through antral follicles but not in granulosa cells, theca cells and corpora lutea.

The protein resides in the nucleus. In terms of biological role, transcription factor which plays an essential role in postnatal follicle development. Binds preferentially to the DNA sequences 5'-TAATTG-3', 5'-TAGTTG-3' and 5'-TAATTA-3'. Directly regulates the transcription of POU5F1 and GDF9 during early folliculogenesis. This Mus musculus (Mouse) protein is Homeobox protein NOBOX (Nobox).